We begin with the raw amino-acid sequence, 504 residues long: Sperm motility kinase 3A (504 aa).

The Protein kinase domain occupies 28 to 276 (YVMLETIGHG…VAEVMVHPWV (249 aa)). ATP-binding positions include 34–42 (IGHGGCATV) and lysine 57. Aspartate 147 functions as the Proton acceptor in the catalytic mechanism. In terms of domain architecture, UBA spans 294-334 (KPDPAIVKAMGHIGFQAQDIEDSLRQRKFNQTMASYCLLKK). Disordered regions lie at residues 389-421 (VCGK…MDHT) and 441-468 (NSSE…WPRG). Over residues 441-451 (NSSEESTQGHT) the composition is skewed to polar residues.

The protein belongs to the protein kinase superfamily. CAMK Ser/Thr protein kinase family. Smok subfamily. Testis-specific. Expressed in the testis from 22 days postpartum (22 dpp).

The catalysed reaction is L-seryl-[protein] + ATP = O-phospho-L-seryl-[protein] + ADP + H(+). The enzyme catalyses L-threonyl-[protein] + ATP = O-phospho-L-threonyl-[protein] + ADP + H(+). Its function is as follows. May play a role in sperm motility, especially in the regulation of flagellar function. The polypeptide is Sperm motility kinase 3A (Mus musculus (Mouse)).